The chain runs to 195 residues: MATTISAVILAGGQAKRMAGLDKGLQLLQGKPLYQHCLQRLTHQVSSISINANRHQAIYQQSGVEVFGDELEDFQGPLSGILTALERANTDFVLFVPCDSPFLPLNLCEKLQSAVENSKSLLAYANDGEREHPAFSLLSTQLKLPLRAYLQSGHRQMLQFFRQHKGISVDFRLQKQAFVNMNTLQDIEKYQNIYA.

Residues 10 to 12, lysine 23, asparagine 51, aspartate 69, and aspartate 99 each bind GTP; that span reads LAG. Aspartate 99 serves as a coordination point for Mg(2+).

This sequence belongs to the MobA family. Monomer. Requires Mg(2+) as cofactor.

Its subcellular location is the cytoplasm. The enzyme catalyses Mo-molybdopterin + GTP + H(+) = Mo-molybdopterin guanine dinucleotide + diphosphate. Functionally, transfers a GMP moiety from GTP to Mo-molybdopterin (Mo-MPT) cofactor (Moco or molybdenum cofactor) to form Mo-molybdopterin guanine dinucleotide (Mo-MGD) cofactor. In Histophilus somni (strain 129Pt) (Haemophilus somnus), this protein is Molybdenum cofactor guanylyltransferase.